The chain runs to 541 residues: Protein wntless homolog (541 aa).

Topologically, residues 1–15 (MAGAIIENMGTKKLC) are cytoplasmic. Residues 16–36 (IVGGILLVFQIIAFLVGGLIA) form a helical membrane-spanning segment. The Lumenal portion of the chain corresponds to 37–232 (PGPTTAVSYM…GIHQNGGFTK (196 aa)). An interaction with Wnt proteins region spans residues 101-232 (MEMSPWFQFM…GIHQNGGFTK (132 aa)). Residues 233-253 (VWFAMKTFLTPSIFIIMVWYW) form a helical membrane-spanning segment. Residues 254-268 (RRITMMSRPPVLLEK) are Cytoplasmic-facing. Residues 269–289 (VIFALGISMTFINIPVEWFSI) form a helical membrane-spanning segment. Residues 290 to 303 (GFDWTWMLLFGDIR) lie on the Lumenal side of the membrane. A helical transmembrane segment spans residues 304 to 324 (QGIFYAMLLSFWIIFCGEHMM). Over 325-331 (DQHERNH) the chain is Cytoplasmic. The chain crosses the membrane as a helical span at residues 332 to 352 (IAGYWKQVGPIAVGSFCLFIF). At 353 to 380 (DMCERGVQLTNPFYSIWTTDIGTELAMA) the chain is on the lumenal side. Residues 381–401 (FIIVAGICLCLYFLFLCFMVF) traverse the membrane as a helical segment. Topologically, residues 402–431 (QVFRNISGKQSSLPAMSKVRRLHYEGLIFR) are cytoplasmic. The chain crosses the membrane as a helical span at residues 432 to 452 (FKFLMLITLACAAMTVIFFIV). At 453–471 (SQVTEGHWKWGGVTVQVNS) the chain is on the lumenal side. The helical transmembrane segment at 472-492 (AFFTGIYGMWNLYVFALMFLY) threads the bilayer. Topologically, residues 493 to 541 (APSHKNYGEDQSNGDLGVHSGEELQLTTTITHVDGPTEIYKLTRKEAQE) are cytoplasmic.

The protein belongs to the wntless family. In terms of assembly, interacts with WNT3A. Interacts with WNT1, WNT3 and WNT5A.

It localises to the golgi apparatus membrane. Its subcellular location is the cytoplasmic vesicle membrane. The protein localises to the cell membrane. The protein resides in the endoplasmic reticulum membrane. It is found in the early endosome membrane. Functionally, regulates Wnt proteins sorting and secretion in a feedback regulatory mechanism. This reciprocal interaction plays a key role in the regulation of expression, subcellular location, binding and organelle-specific association of Wnt proteins. Also plays an important role in establishment of the anterior-posterior body axis formation during development. This Pongo abelii (Sumatran orangutan) protein is Protein wntless homolog (WLS).